The sequence spans 176 residues: Probable inosine/xanthosine triphosphatase (176 aa).

A Mg(2+)-binding site is contributed by Asp36.

The protein belongs to the YjjX NTPase family. Homodimer. It depends on Mg(2+) as a cofactor. Mn(2+) is required as a cofactor.

It catalyses the reaction XTP + H2O = XDP + phosphate + H(+). The catalysed reaction is ITP + H2O = IDP + phosphate + H(+). In terms of biological role, phosphatase that hydrolyzes non-canonical purine nucleotides such as XTP and ITP to their respective diphosphate derivatives. Probably excludes non-canonical purines from DNA/RNA precursor pool, thus preventing their incorporation into DNA/RNA and avoiding chromosomal lesions. This is Probable inosine/xanthosine triphosphatase from Saccharolobus islandicus (strain M.14.25 / Kamchatka #1) (Sulfolobus islandicus).